Here is a 513-residue protein sequence, read N- to C-terminus: Carotenoid isomerooxygenase (513 aa).

H184, H242, H312, and H503 together coordinate Fe cation.

It belongs to the carotenoid oxygenase family. It depends on Fe(2+) as a cofactor.

It catalyses the reaction all-trans-zeaxanthin + O2 = (3R)-11-cis-3-hydroxyretinal + (3R)-all-trans-3-hydroxyretinal. It participates in cofactor metabolism; retinol metabolism. In terms of biological role, catalyzes the oxidative cleavage at the 15,15'-double bond of carotenoids and the simultaneous all-trans to 11-cis isomerization of one cleavage product. Carotenoids like 11-cis retinal can promote visual pigment biogenesis in the dark. Essential for the biosynthesis of the 3-hydroxyretinal chromophore of rhodopsin from zeaxanthin and for proper photoreceptor development. This chain is Carotenoid isomerooxygenase (ninaB), found in Galleria mellonella (Greater wax moth).